The primary structure comprises 508 residues: Hydroxymethylglutaryl-CoA synthase, mitochondrial (508 aa).

The transit peptide at 1–37 (MQRLLAPARRVLQVKRAMQETSLTPAHLLSAAQQRFS) directs the protein to the mitochondrion. Position 52 is an N6-succinyllysine (Lys-52). Glu-80 and Ala-81 together coordinate (3S)-3-hydroxy-3-methylglutaryl-CoA. Residues Lys-83 and Lys-118 each carry the N6-acetyllysine; alternate modification. N6-succinyllysine; alternate is present on residues Lys-83 and Lys-118. Residue Glu-132 is the Proton donor/acceptor of the active site. (3S)-3-hydroxy-3-methylglutaryl-CoA contacts are provided by Cys-166, Asn-204, and Thr-208. Cys-166 (acyl-thioester intermediate) is an active-site residue. Lys-221 is modified (N6-succinyllysine). An N6-acetyllysine modification is found at Lys-243. Lys-256 carries the N6-acetyllysine; alternate modification. Lys-256 is subject to N6-succinyllysine; alternate. Residues Ser-258 and His-301 each contribute to the (3S)-3-hydroxy-3-methylglutaryl-CoA site. The Proton donor/acceptor role is filled by His-301. Lys-306 is modified (N6-acetyllysine). (3S)-3-hydroxy-3-methylglutaryl-CoA is bound at residue Lys-310. 2 positions are modified to N6-acetyllysine; alternate: Lys-310 and Lys-327. 2 positions are modified to N6-succinyllysine; alternate: Lys-310 and Lys-327. Lys-333 carries the post-translational modification N6-succinyllysine. N6-acetyllysine; alternate is present on residues Lys-342, Lys-350, Lys-354, and Lys-358. An N6-succinyllysine; alternate mark is found at Lys-342, Lys-350, Lys-354, and Lys-358. (3S)-3-hydroxy-3-methylglutaryl-CoA-binding residues include Asn-380 and Ser-414. At Lys-427 the chain carries N6-acetyllysine. Position 433 is a phosphoserine (Ser-433). An N6-acetyllysine modification is found at Lys-437. Ser-440 carries the phosphoserine modification. The residue at position 447 (Lys-447) is an N6-acetyllysine; alternate. Lys-447 is modified (N6-succinyllysine; alternate). At Ser-456 the chain carries Phosphoserine. Residue Lys-473 is modified to N6-acetyllysine; alternate. The residue at position 473 (Lys-473) is an N6-succinyllysine; alternate. A Phosphoserine modification is found at Ser-477.

The protein belongs to the thiolase-like superfamily. HMG-CoA synthase family. Homodimer. Post-translationally, acetylation of Lys-427 is observed in liver mitochondria from fasted mice but not from fed mice. Succinylated. Desuccinylated by SIRT5. Succinylation, at least at Lys-83 and Lys-310, inhibits the enzymatic activity. Liver and kidney.

It is found in the mitochondrion. The enzyme catalyses acetoacetyl-CoA + acetyl-CoA + H2O = (3S)-3-hydroxy-3-methylglutaryl-CoA + CoA + H(+). The protein operates within metabolic intermediate biosynthesis; (R)-mevalonate biosynthesis; (R)-mevalonate from acetyl-CoA: step 2/3. Catalyzes the first irreversible step in ketogenesis, condensing acetyl-CoA to acetoacetyl-CoA to form HMG-CoA, which is converted by HMG-CoA reductase (HMGCR) into mevalonate. This is Hydroxymethylglutaryl-CoA synthase, mitochondrial (Hmgcs2) from Mus musculus (Mouse).